Here is a 342-residue protein sequence, read N- to C-terminus: Type II restriction enzyme CviAII (342 aa).

The catalysed reaction is Endonucleolytic cleavage of DNA to give specific double-stranded fragments with terminal 5'-phosphates.. In terms of biological role, a P subtype restriction enzyme that recognizes the double-stranded sequence 5'-CATG-3' and cleaves after C-1. In Chlorella (PBCV-1), this protein is Type II restriction enzyme CviAII (CVIAIIR).